The primary structure comprises 473 residues: MKSTQSFSAVAGFVRLPKSSLGQVRYYSILKDMSIPASKQKFIPSSGTYPKGFLVAGAHAGVKESNTRFPDVALICSETPCSAAAVFTANKFQAAPVQVSKQVLETRQGTGIRGVVVNSGCANAVTGKGGLEDAKMMSAKVDECTGTPSADPQNTSTLVMSTGVIGQRLPIKKILDTIPTAHSNLASNHSAWLTAARAICTTDTFPKLLSRTFTLPSSPNRAYHLAGMTKGAGMIHPNMATLLGILCTDVPISPSVLNPLLTHAVSRSFNSISIDGDTSTNDTVALLANGAAGGETITTTSSPDYTAMQTILTNFAQSLAQLVVRDGEGATKFVTVRVRNSPSHADAKVIASTIARSPLVKTALYGKDANWGRILCAIGYSQGIAEGTVVPERTSVSFKPVDGSEELKLLVNGEPEAVDEERAARILQDEDLEIVVDLGGGEKGDKGLGGEEGVYWFCDFSHEYVTINGDYRT.

Residues Thr-201, Lys-230, Thr-241, Glu-328, Asn-468, and Thr-473 each coordinate substrate. The active-site Nucleophile is Thr-241.

Belongs to the ArgJ family. As to quaternary structure, heterodimer of an alpha and a beta chain. Post-translationally, the alpha and beta chains are autoproteolytically processed from a single precursor protein within the mitochondrion.

Its subcellular location is the mitochondrion matrix. It carries out the reaction N(2)-acetyl-L-ornithine + L-glutamate = N-acetyl-L-glutamate + L-ornithine. The enzyme catalyses L-glutamate + acetyl-CoA = N-acetyl-L-glutamate + CoA + H(+). Its pathway is amino-acid biosynthesis; L-arginine biosynthesis; L-ornithine and N-acetyl-L-glutamate from L-glutamate and N(2)-acetyl-L-ornithine (cyclic): step 1/1. It participates in amino-acid biosynthesis; L-arginine biosynthesis; N(2)-acetyl-L-ornithine from L-glutamate: step 1/4. Functionally, catalyzes two activities which are involved in the cyclic version of arginine biosynthesis: the synthesis of acetylglutamate from glutamate and acetyl-CoA, and of ornithine by transacetylation between acetylornithine and glutamate. The sequence is that of Arginine biosynthesis bifunctional protein ArgJ, mitochondrial from Blastomyces gilchristii (strain SLH14081) (Blastomyces dermatitidis).